The chain runs to 341 residues: uncharacterized protein (341 aa).

The next 4 membrane-spanning stretches (helical) occupy residues 8–28 (LMLT…PLII), 63–83 (LMYF…VFAL), 171–191 (IYIM…IALS), and 317–337 (EFLV…KIFL). In terms of domain architecture, VWFA spans 101–305 (DIVIVLDISP…SKKENLERKI (205 aa)).

Its subcellular location is the cell membrane. This is an uncharacterized protein from Borreliella burgdorferi (strain ATCC 35210 / DSM 4680 / CIP 102532 / B31) (Borrelia burgdorferi).